The sequence spans 216 residues: Probable GTP-binding protein EngB (216 aa).

In terms of domain architecture, EngB-type G spans 30 to 204 (SGLEVAFAGR…QMVLAGWLDL (175 aa)). Residues 38 to 45 (GRSNAGKS), 64 to 68 (GRTQL), 82 to 85 (DLPG), 149 to 152 (TKAD), and 182 to 185 (LFSA) each bind GTP. Residues serine 45 and threonine 66 each coordinate Mg(2+).

This sequence belongs to the TRAFAC class TrmE-Era-EngA-EngB-Septin-like GTPase superfamily. EngB GTPase family. It depends on Mg(2+) as a cofactor.

In terms of biological role, necessary for normal cell division and for the maintenance of normal septation. The chain is Probable GTP-binding protein EngB from Ectopseudomonas mendocina (strain ymp) (Pseudomonas mendocina).